A 172-amino-acid polypeptide reads, in one-letter code: UPF0316 protein Clos_0555 (172 aa).

A run of 3 helical transmembrane segments spans residues 3 to 23 (ALLG…MATI), 34 to 54 (VIAA…IGKV), and 61 to 81 (PLNV…GIFL).

The protein belongs to the UPF0316 family.

It localises to the cell membrane. The chain is UPF0316 protein Clos_0555 from Alkaliphilus oremlandii (strain OhILAs) (Clostridium oremlandii (strain OhILAs)).